Consider the following 968-residue polypeptide: Isoleucine--tRNA ligase (968 aa).

Residues P68–H78 carry the 'HIGH' region motif. E584 contributes to the L-isoleucyl-5'-AMP binding site. The 'KMSKS' region motif lies at K625 to S629. ATP is bound at residue K628. Zn(2+)-binding residues include C938, C941, C958, and C961.

Belongs to the class-I aminoacyl-tRNA synthetase family. IleS type 1 subfamily. As to quaternary structure, monomer. Requires Zn(2+) as cofactor.

Its subcellular location is the cytoplasm. It carries out the reaction tRNA(Ile) + L-isoleucine + ATP = L-isoleucyl-tRNA(Ile) + AMP + diphosphate. Its function is as follows. Catalyzes the attachment of isoleucine to tRNA(Ile). As IleRS can inadvertently accommodate and process structurally similar amino acids such as valine, to avoid such errors it has two additional distinct tRNA(Ile)-dependent editing activities. One activity is designated as 'pretransfer' editing and involves the hydrolysis of activated Val-AMP. The other activity is designated 'posttransfer' editing and involves deacylation of mischarged Val-tRNA(Ile). In Synechococcus sp. (strain CC9311), this protein is Isoleucine--tRNA ligase.